A 2342-amino-acid polypeptide reads, in one-letter code: Outer kinetochore KNL1 complex subunit KNL1 (2342 aa).

The disordered stretch occupies residues 1–56 (MDGVSSEANEENDNIERPVRRRHSSILKPPRSPLQDLRGGNERVQESNALRNKKNS). The segment at 1–250 (MDGVSSEANE…FNDFIKRLKT (250 aa)) is may mediate oligomerization. The segment at 1–728 (MDGVSSEANE…QSLFSTTKPL (728 aa)) is interaction with BUB1 and BUB1B. Interaction with microtubules stretches follow at residues 17–34 (RPVRRRHSSILKPPRSPL) and 53–80 (KKNSRRVSFADTIKVFQTESHMKIVRKS). The interaction with PP1CA; contains the protein phosphatase 1 (PP1) interaction motifs SILK, RVXF and phi-phi stretch occupies residues 23-80 (HSSILKPPRSPLQDLRGGNERVQESNALRNKKNSRRVSFADTIKVFQTESHMKIVRKS). Ser-24 carries the phosphoserine; by AURKB modification. Position 32 is a phosphoserine (Ser-32). At Ser-60 the chain carries Phosphoserine; by AURKB. Positions 174–190 (ENQMDLTSSHTVMITKG) are interaction with BUB1. Positions 210–226 (ANLKLHTEDSRMKKEVN) are interaction with BUB1B. Thr-539 carries the post-translational modification Phosphothreonine. A phosphoserine mark is found at Ser-578 and Ser-584. A Phosphothreonine modification is found at Thr-586. The interval 620–646 (APESTSESHSQSKSSSDECEEITKSRN) is disordered. Residues 622–633 (ESTSESHSQSKS) are compositionally biased toward low complexity. Ser-767 bears the Phosphoserine mark. The 2 X 104 AA approximate repeats stretch occupies residues 855 to 1201 (EDESVQKPKF…VTDSHTVFID (347 aa)). Residues 885 to 989 (DKTIVFSEDD…MTESHTVFID (105 aa)) form repeat 1. Thr-901 carries the post-translational modification Phosphothreonine. 4 positions are modified to phosphoserine: Ser-956, Ser-1039, Ser-1076, and Ser-1088. Repeat unit 2 spans residues 1099 to 1201 (DKTIVFSENH…VTDSHTVFID (103 aa)). The residue at position 1448 (Ser-1448) is a Phosphoserine. The tract at residues 1639–1662 (SNAKDSRDEENKKSHNGAETTSLP) is disordered. Residues 1642–1651 (KDSRDEENKK) are compositionally biased toward basic and acidic residues. Phosphoserine is present on residues Ser-1675 and Ser-1773. The Nuclear localization signal signature appears at 1789-1803 (TWVQEEEDIHKEKKI). Position 1831 is a phosphoserine (Ser-1831). 2 positions are modified to phosphoserine; by TTK: Ser-1831 and Ser-1834. Phosphoserine occurs at positions 1845 and 1860. Residues 1981-2108 (KMRHCSDKEL…LLELEVQKEQ (128 aa)) are required for interaction with ZWINT. A coiled-coil region spans residues 2024-2133 (VQSAQNEREK…EELLDQLSLS (110 aa)). The tract at residues 2091-2311 (EEEELQRNLL…GNTSQDDIAT (221 aa)) is interaction with NSL1, DSN1 and required for assembly into the outer kinetochore.

In terms of assembly, component of the KNL1 complex composed of KNL1 and ZWINT. Part of the ten-subunit outer kinetochore KMN network that includes the KNL1, MIS12 and NDC80 complexes; a bioriented kinetochore contains approximately 150 copies of the network. Interacts (via C-terminus) with the MIS12 complex subunits NSL1 (via C-terminus), PMF1 and DSN1; the interaction is direct. Interacts (via N-terminal region) with BUB1B (via BUB1 N-terminal domain); the interaction is direct and is required for cell cycle arrest upon activation of the mitotic spindle assembly checkpoint. Interacts (via N-terminal region) with BUB1 (via BUB1 N-terminal domain); the interaction is direct. Interacts with the protein phosphatase PP1 subunit PPP1CA; the interaction is direct and mutually exclusive with binding to microtubules. Interacts with the protein phosphatase PP1 subunit PPP1CC; the interaction is direct and mutually exclusive with binding to microtubules. Phosphorylation by AURKB negatively regulates its interaction with protein phosphatase 1 (PP1) subunit PPP1CA and with microtubules. Highly expressed in testis, where it is localized in germ cells, in particular in spermatocytes and in the pre-acrosome of round spermatids. Detected in the acrosome of ejaculated spermatozoa. Detected in adult thymus, bone marrow, colon, small intestine, appendix and placenta, and in fetal liver and thymus.

It is found in the nucleus. The protein localises to the chromosome. The protein resides in the centromere. Its subcellular location is the kinetochore. It localises to the cytoplasm. Its function is as follows. Acts as a component of the outer kinetochore KNL1 complex that serves as a docking point for spindle assembly checkpoint components and mediates microtubule-kinetochore interactions. Kinetochores, consisting of a centromere-associated inner segment and a microtubule-contacting outer segment, play a crucial role in chromosome segregation by mediating the physical connection between centromeric DNA and spindle microtubules. The outer kinetochore is made up of the ten-subunit KMN network, comprising the MIS12, NDC80 and KNL1 complexes, and auxiliary microtubule-associated components; together they connect the outer kinetochore with the inner kinetochore, bind microtubules, and mediate interactions with mitotic checkpoint proteins that delay anaphase until chromosomes are bioriented on the spindle. Required for kinetochore binding by a distinct subset of kMAPs (kinetochore-bound microtubule-associated proteins) and motors. Acts in coordination with CENPK to recruit the NDC80 complex to the outer kinetochore. Can bind either to microtubules or to the protein phosphatase 1 (PP1) catalytic subunits PPP1CA and PPP1CC (via overlapping binding sites), it has higher affinity for PP1. Recruits MAD2L1 to the kinetochore and also directly links BUB1 and BUB1B to the kinetochore. In addition to orienting mitotic chromosomes, it is also essential for alignment of homologous chromosomes during meiotic metaphase I. In meiosis I, required to activate the spindle assembly checkpoint at unattached kinetochores to correct erroneous kinetochore-microtubule attachments. This chain is Outer kinetochore KNL1 complex subunit KNL1, found in Homo sapiens (Human).